A 313-amino-acid chain; its full sequence is Tyrosine recombinase XerC (313 aa).

The Core-binding (CB) domain occupies 11–97; that stretch reads NSLQKPLERF…SLRSFFDFLI (87 aa). The 181-residue stretch at 118–298 folds into the Tyr recombinase domain; sequence PLPKNLDVDE…DFQHLAQAYD (181 aa). Residues R157, K181, H250, R253, and H276 contribute to the active site. Y285 (O-(3'-phospho-DNA)-tyrosine intermediate) is an active-site residue.

Belongs to the 'phage' integrase family. XerC subfamily. In terms of assembly, forms a cyclic heterotetrameric complex composed of two molecules of XerC and two molecules of XerD.

The protein resides in the cytoplasm. Its function is as follows. Site-specific tyrosine recombinase, which acts by catalyzing the cutting and rejoining of the recombining DNA molecules. The XerC-XerD complex is essential to convert dimers of the bacterial chromosome into monomers to permit their segregation at cell division. It also contributes to the segregational stability of plasmids. This chain is Tyrosine recombinase XerC, found in Vibrio campbellii (strain ATCC BAA-1116).